Consider the following 470-residue polypeptide: 6-phospho-beta-galactosidase 1 (470 aa).

D-galactose 6-phosphate contacts are provided by glutamine 23, histidine 120, asparagine 163, glutamate 164, and asparagine 300. Glutamate 164 (proton donor) is an active-site residue. Residue glutamate 378 is the Nucleophile of the active site. Residues serine 434, tryptophan 435, lysine 441, and tyrosine 443 each contribute to the D-galactose 6-phosphate site.

It belongs to the glycosyl hydrolase 1 family.

The catalysed reaction is a 6-phospho-beta-D-galactoside + H2O = D-galactose 6-phosphate + an alcohol. The protein operates within carbohydrate metabolism; lactose degradation; D-galactose 6-phosphate and beta-D-glucose from lactose 6-phosphate: step 1/1. The sequence is that of 6-phospho-beta-galactosidase 1 from Streptococcus pneumoniae (strain ATCC BAA-255 / R6).